Consider the following 145-residue polypeptide: D-aminoacyl-tRNA deacylase (145 aa).

The Gly-cisPro motif, important for rejection of L-amino acids motif lies at 137 to 138 (GP).

It belongs to the DTD family. Homodimer.

It localises to the cytoplasm. It catalyses the reaction glycyl-tRNA(Ala) + H2O = tRNA(Ala) + glycine + H(+). The catalysed reaction is a D-aminoacyl-tRNA + H2O = a tRNA + a D-alpha-amino acid + H(+). An aminoacyl-tRNA editing enzyme that deacylates mischarged D-aminoacyl-tRNAs. Also deacylates mischarged glycyl-tRNA(Ala), protecting cells against glycine mischarging by AlaRS. Acts via tRNA-based rather than protein-based catalysis; rejects L-amino acids rather than detecting D-amino acids in the active site. By recycling D-aminoacyl-tRNA to D-amino acids and free tRNA molecules, this enzyme counteracts the toxicity associated with the formation of D-aminoacyl-tRNA entities in vivo and helps enforce protein L-homochirality. This is D-aminoacyl-tRNA deacylase from Pseudomonas syringae pv. tomato (strain ATCC BAA-871 / DC3000).